We begin with the raw amino-acid sequence, 127 residues long: Aspartate 1-decarboxylase (127 aa).

Serine 25 (schiff-base intermediate with substrate; via pyruvic acid) is an active-site residue. Serine 25 is subject to Pyruvic acid (Ser). Threonine 57 lines the substrate pocket. Tyrosine 58 (proton donor) is an active-site residue. Substrate is bound at residue 73–75 (GAA).

The protein belongs to the PanD family. In terms of assembly, heterooctamer of four alpha and four beta subunits. Pyruvate is required as a cofactor. In terms of processing, is synthesized initially as an inactive proenzyme, which is activated by self-cleavage at a specific serine bond to produce a beta-subunit with a hydroxyl group at its C-terminus and an alpha-subunit with a pyruvoyl group at its N-terminus.

The protein resides in the cytoplasm. The enzyme catalyses L-aspartate + H(+) = beta-alanine + CO2. The protein operates within cofactor biosynthesis; (R)-pantothenate biosynthesis; beta-alanine from L-aspartate: step 1/1. Its function is as follows. Catalyzes the pyruvoyl-dependent decarboxylation of aspartate to produce beta-alanine. The chain is Aspartate 1-decarboxylase from Clostridium kluyveri (strain NBRC 12016).